Reading from the N-terminus, the 309-residue chain is Homoserine O-acetyltransferase (309 aa).

Cys148 acts as the Acyl-thioester intermediate in catalysis. Substrate-binding residues include Lys169 and Ser198. Catalysis depends on His241, which acts as the Proton acceptor. Residue Glu243 is part of the active site. Arg255 serves as a coordination point for substrate.

Belongs to the MetA family.

It is found in the cytoplasm. It catalyses the reaction L-homoserine + acetyl-CoA = O-acetyl-L-homoserine + CoA. It participates in amino-acid biosynthesis; L-methionine biosynthesis via de novo pathway; O-acetyl-L-homoserine from L-homoserine: step 1/1. Its function is as follows. Transfers an acetyl group from acetyl-CoA to L-homoserine, forming acetyl-L-homoserine. In vitro, can also use propionyl-CoA as acyl donor. The chain is Homoserine O-acetyltransferase from Shouchella clausii (Alkalihalobacillus clausii).